The sequence spans 312 residues: Zinc transporter ZitB (312 aa).

Helical transmembrane passes span 16 to 36 (LLIA…GGWL), 40 to 60 (LALL…FIAL), 81 to 101 (LTTL…ILIV), 117 to 137 (TPML…FWIL), 153 to 173 (LHVL…IVIL), and 177 to 197 (WTPI…RSAW).

It belongs to the cation diffusion facilitator (CDF) transporter (TC 2.A.4) family. SLC30A subfamily.

The protein resides in the cell inner membrane. Functionally, involved in zinc efflux across the cytoplasmic membrane, thus reducing zinc accumulation in the cytoplasm and rendering bacteria more resistant to zinc. It may contribute to zinc homeostasis at low concentrations of zinc. The polypeptide is Zinc transporter ZitB (Yersinia pestis).